The sequence spans 410 residues: LL-diaminopimelate aminotransferase (410 aa).

Residues tyrosine 15 and glycine 42 each contribute to the substrate site. Residues tyrosine 72, 108 to 109, tyrosine 132, asparagine 187, tyrosine 218, and 246 to 248 contribute to the pyridoxal 5'-phosphate site; these read SK and SFS. Residues lysine 109, tyrosine 132, and asparagine 187 each coordinate substrate. Position 249 is an N6-(pyridoxal phosphate)lysine (lysine 249). The pyridoxal 5'-phosphate site is built by arginine 257 and asparagine 292. The substrate site is built by asparagine 292 and arginine 388.

It belongs to the class-I pyridoxal-phosphate-dependent aminotransferase family. LL-diaminopimelate aminotransferase subfamily. In terms of assembly, homodimer. Requires pyridoxal 5'-phosphate as cofactor.

It carries out the reaction (2S,6S)-2,6-diaminopimelate + 2-oxoglutarate = (S)-2,3,4,5-tetrahydrodipicolinate + L-glutamate + H2O + H(+). It participates in amino-acid biosynthesis; L-lysine biosynthesis via DAP pathway; LL-2,6-diaminopimelate from (S)-tetrahydrodipicolinate (aminotransferase route): step 1/1. Involved in the synthesis of meso-diaminopimelate (m-DAP or DL-DAP), required for both lysine and peptidoglycan biosynthesis. Catalyzes the direct conversion of tetrahydrodipicolinate to LL-diaminopimelate. The polypeptide is LL-diaminopimelate aminotransferase (Geotalea daltonii (strain DSM 22248 / JCM 15807 / FRC-32) (Geobacter daltonii)).